A 417-amino-acid chain; its full sequence is NADH-quinone oxidoreductase subunit D (417 aa).

This sequence belongs to the complex I 49 kDa subunit family. NDH-1 is composed of 14 different subunits. Subunits NuoB, C, D, E, F, and G constitute the peripheral sector of the complex.

The protein localises to the cell inner membrane. The catalysed reaction is a quinone + NADH + 5 H(+)(in) = a quinol + NAD(+) + 4 H(+)(out). NDH-1 shuttles electrons from NADH, via FMN and iron-sulfur (Fe-S) centers, to quinones in the respiratory chain. The immediate electron acceptor for the enzyme in this species is believed to be ubiquinone. Couples the redox reaction to proton translocation (for every two electrons transferred, four hydrogen ions are translocated across the cytoplasmic membrane), and thus conserves the redox energy in a proton gradient. The polypeptide is NADH-quinone oxidoreductase subunit D (Janthinobacterium sp. (strain Marseille) (Minibacterium massiliensis)).